We begin with the raw amino-acid sequence, 485 residues long: Probable L-xylulose kinase (485 aa).

This sequence belongs to the FGGY kinase family. Homodimer.

The catalysed reaction is L-xylulose + ATP = L-xylulose 5-phosphate + ADP + H(+). The protein is Probable L-xylulose kinase (lyx) of Haemophilus influenzae (strain ATCC 51907 / DSM 11121 / KW20 / Rd).